Reading from the N-terminus, the 1019-residue chain is Phosphatidylinositol 3,4,5-trisphosphate 5-phosphatase 1 (1019 aa).

Residues 5 to 101 (WYHGNITRSK…GLVTHLQYPI (97 aa)) form the SH2 domain. Acidic residues predominate over residues 103 to 116 (KEEEGPEEPDEEQE). Disordered regions lie at residues 103–133 (KEEEGPEEPDEEQEPAPPNVPPRNFAFTPPS) and 909–1019 (ETQN…PPTA). The SH3-binding 1 signature appears at 120–125 (PNVPPR). Polar residues-rich tracts occupy residues 909-931 (ETQNSMDHTASVAAISSQAKQSP) and 958-980 (PITSPPRTTLSTQKFSHSNTNRT). An SH3-binding 2 motif is present at residues 966–971 (TLSTQK). The short motif at 1004–1007 (NPLY) is the NPXY motif element. Tyr-1007 is subject to Phosphotyrosine. Over residues 1010–1019 (VNNTLYPPTA) the composition is skewed to polar residues.

It belongs to the inositol 1,4,5-trisphosphate 5-phosphatase family. Post-translationally, tyrosine phosphorylated by the members of the SRC family after exposure to a diverse array of extracellular stimuli.

It is found in the cytoplasm. It localises to the cell membrane. The protein resides in the membrane raft. The protein localises to the cytoskeleton. It carries out the reaction a 1,2-diacyl-sn-glycero-3-phospho-(1D-myo-inositol-3,4,5-trisphosphate) + H2O = a 1,2-diacyl-sn-glycero-3-phospho-(1D-myo-inositol-3,4-bisphosphate) + phosphate. It catalyses the reaction 1D-myo-inositol 1,3,4,5-tetrakisphosphate + H2O = 1D-myo-inositol 1,3,4-trisphosphate + phosphate. The enzyme catalyses a 1,2-diacyl-sn-glycero-3-phospho-(1D-myo-inositol-4,5-bisphosphate) + H2O = a 1,2-diacyl-sn-glycero-3-phospho-(1D-myo-inositol 4-phosphate) + phosphate. Functionally, phosphatidylinositol (PtdIns) phosphatase that specifically hydrolyzes the 5-phosphate of phosphatidylinositol-3,4,5-trisphosphate (PtdIns(3,4,5)P3) to produce PtdIns(3,4)P2, thereby negatively regulating the PI3K (phosphoinositide 3-kinase) pathways. Able also to hydrolyzes the 5-phosphate of phosphatidylinositol-4,5-bisphosphate (PtdIns(4,5)P3) and inositol 1,3,4,5-tetrakisphosphate. Acts as a negative regulator of B-cell antigen receptor signaling. Mediates signaling from the FC-gamma-RIIB receptor (FCGR2B), playing a central role in terminating signal transduction from activating immune/hematopoietic cell receptor systems. Acts as a negative regulator of myeloid cell proliferation/survival and chemotaxis, mast cell degranulation, immune cells homeostasis, integrin alpha-IIb/beta-3 signaling in platelets and JNK signaling in B-cells. This chain is Phosphatidylinositol 3,4,5-trisphosphate 5-phosphatase 1 (inpp5d), found in Xenopus laevis (African clawed frog).